A 266-amino-acid polypeptide reads, in one-letter code: Biotin--[acetyl-CoA-carboxylase] ligase (266 aa).

In terms of domain architecture, BPL/LPL catalytic spans 14-202; it reads RSLRDQLIGA…ELEARIIQWR (189 aa). Biotin-binding positions include 38-39, Gln-63, Arg-67, and Lys-138; that span reads ST.

It belongs to the biotin--protein ligase family. Monomer in solution. Forms dimers under specific crystallization conditions.

It carries out the reaction biotin + L-lysyl-[protein] + ATP = N(6)-biotinyl-L-lysyl-[protein] + AMP + diphosphate + H(+). The catalysed reaction is biotin + ATP + H(+) = biotinyl-5'-AMP + diphosphate. The enzyme catalyses biotinyl-5'-AMP + L-lysyl-[protein] = N(6)-biotinyl-L-lysyl-[protein] + AMP + 2 H(+). Its activity is regulated as follows. Binding of biotin and ATP significantly increases the thermal stability of BirA and leads to the formation of a high affinity holoenzyme complex. Catalyzes the transfer of biotin onto a conserved lysine residue of the biotin carboxyl carrier protein (BCCP) domain of acetyl-CoA carboxylase and converts it to active holo-BCCP. Forms an acyl-adenylate intermediate. Cannot use GTP or desthiobiotin. The sequence is that of Biotin--[acetyl-CoA-carboxylase] ligase from Mycobacterium tuberculosis (strain ATCC 25618 / H37Rv).